A 443-amino-acid polypeptide reads, in one-letter code: Endonuclease CUE2 (443 aa).

2 consecutive CUE domains span residues 8–51 (DHES…KEND) and 55–98 (TVDN…NYET). The Smr domain occupies 347–443 (LDFHGFLPSE…YFRIEGKKKK (97 aa)).

MRNA endonuclease involved in the No-Go Decay (NGD) pathway, which catalyzes mRNA cleavage and degradation in response to ribosome collisions. Acts downstream of the ribosome collision sensor HEL2. Specifically recognizes and binds RPS7/eS7 polyubiquitinated by MOT2/NOT4 and HEL2, promoting CUE2 recruitment to stalled ribosomes, where it mediates mRNA cleavage upstream of the colliding ribosome. Also mediates mRNA cleavage within colliding ribosomes: recruited to colliding ribosomes downstream of the RQT (ribosome quality control trigger) complex following disassembly of stalled ribosomes and cleaves mRNAs partially released from the colliding ribosome. In Saccharomyces cerevisiae (strain ATCC 204508 / S288c) (Baker's yeast), this protein is Endonuclease CUE2.